The following is a 391-amino-acid chain: Calcium-binding and spermatid-specific protein 1 (391 aa).

Disordered regions lie at residues 1–23 (MAEDGSPKIYSRPPRDNSKTPTE), 90–110 (PEKEITTPTETPNSKPKGSIT), and 152–221 (KEVV…KEVT). Low complexity predominate over residues 90–101 (PEKEITTPTETP). S253 and S269 each carry phosphoserine. The disordered stretch occupies residues 271-299 (EKAKDNVEDPLNDEESTDGANDWMEKETA). The segment covering 278-287 (EDPLNDEEST) has biased composition (acidic residues). A phosphoserine mark is found at S314, S347, S357, S372, and S376. The interval 330–351 (EESHVNTTDLPENETTESVTNV) is disordered.

In terms of tissue distribution, detected only in testis. Expressed from stages X to VIII of the seminiferous epithelial cycle. Expressed from step 13 to step 16 of spermatid development (at protein level).

The protein localises to the cytoplasm. The protein resides in the mitochondrion inner membrane. It is found in the cell projection. Its subcellular location is the cilium. It localises to the flagellum. The protein localises to the cytoplasmic vesicle. The protein resides in the secretory vesicle. It is found in the acrosome. Functionally, calcium-binding protein. Essential for maintaining the structural integrity of the sperm flagella. The chain is Calcium-binding and spermatid-specific protein 1 (Cabs1) from Mus musculus (Mouse).